The following is a 425-amino-acid chain: Serine--tRNA ligase (425 aa).

232 to 234 contacts L-serine; sequence TSE. ATP contacts are provided by residues 263 to 265 and Val279; that span reads RRE. Residue Glu286 coordinates L-serine. 350–353 is a binding site for ATP; that stretch reads EVVS. Thr387 is an L-serine binding site.

Belongs to the class-II aminoacyl-tRNA synthetase family. Type-1 seryl-tRNA synthetase subfamily. Homodimer. The tRNA molecule binds across the dimer.

It is found in the cytoplasm. The enzyme catalyses tRNA(Ser) + L-serine + ATP = L-seryl-tRNA(Ser) + AMP + diphosphate + H(+). The catalysed reaction is tRNA(Sec) + L-serine + ATP = L-seryl-tRNA(Sec) + AMP + diphosphate + H(+). The protein operates within aminoacyl-tRNA biosynthesis; selenocysteinyl-tRNA(Sec) biosynthesis; L-seryl-tRNA(Sec) from L-serine and tRNA(Sec): step 1/1. In terms of biological role, catalyzes the attachment of serine to tRNA(Ser). Is also able to aminoacylate tRNA(Sec) with serine, to form the misacylated tRNA L-seryl-tRNA(Sec), which will be further converted into selenocysteinyl-tRNA(Sec). The sequence is that of Serine--tRNA ligase from Methanocella arvoryzae (strain DSM 22066 / NBRC 105507 / MRE50).